The following is a 966-amino-acid chain: Probable LIM domain-containing serine/threonine-protein kinase DDB_G0286997 (966 aa).

2 LIM zinc-binding domains span residues 3-62 (SRCG…LNAP) and 63-120 (KCFK…KPPP). Disordered regions lie at residues 208 to 291 (YSLS…PTED) and 331 to 588 (PLNQ…EQQV). The segment covering 211–231 (SSPSSSSSSSSSSSSSSSSPP) has biased composition (low complexity). Residues 232–269 (NTFNKSSDFLRNPLNNNVKSSSSSIGGNFVNKSQQQQQ) are compositionally biased toward polar residues. Composition is skewed to low complexity over residues 270–284 (PIDS…ISPS) and 331–350 (PLNQ…SPNL). Positions 374-389 (TTTFSNPLLKTKNQSF) are enriched in polar residues. Pro residues predominate over residues 419–430 (PLPPPPITPIPS). Residues 431-449 (PSSSSIIINNQQQQQQESQ) show a composition bias toward low complexity. Over residues 490–511 (KPIVLPPPPLDMEQLPLPPPPL) the composition is skewed to pro residues. The segment covering 513-526 (SSQINQSLKSTQHN) has biased composition (polar residues). Positions 543-560 (IQKQSIPTRKPQLPQSSN) are enriched in low complexity. A compositionally biased stretch (pro residues) spans 561 to 570 (PSPPSPPSPQ). The Protein kinase domain occupies 702-959 (VIFGDVIAAG…DTLKKISESL (258 aa)). ATP-binding positions include 708–716 (IAAGASGKV) and lysine 729. Residue aspartate 825 is the Proton acceptor of the active site.

This sequence belongs to the protein kinase superfamily. TKL Ser/Thr protein kinase family.

It catalyses the reaction L-seryl-[protein] + ATP = O-phospho-L-seryl-[protein] + ADP + H(+). The enzyme catalyses L-threonyl-[protein] + ATP = O-phospho-L-threonyl-[protein] + ADP + H(+). This is Probable LIM domain-containing serine/threonine-protein kinase DDB_G0286997 from Dictyostelium discoideum (Social amoeba).